The primary structure comprises 274 residues: 2,3,4,5-tetrahydropyridine-2,6-dicarboxylate N-succinyltransferase (274 aa).

Substrate is bound by residues Arg103 and Asp140.

The protein belongs to the transferase hexapeptide repeat family. As to quaternary structure, homotrimer.

It is found in the cytoplasm. It catalyses the reaction (S)-2,3,4,5-tetrahydrodipicolinate + succinyl-CoA + H2O = (S)-2-succinylamino-6-oxoheptanedioate + CoA. It participates in amino-acid biosynthesis; L-lysine biosynthesis via DAP pathway; LL-2,6-diaminopimelate from (S)-tetrahydrodipicolinate (succinylase route): step 1/3. The sequence is that of 2,3,4,5-tetrahydropyridine-2,6-dicarboxylate N-succinyltransferase from Actinobacillus pleuropneumoniae serotype 5b (strain L20).